The primary structure comprises 560 residues: Membrane protein insertase YidC (560 aa).

6 helical membrane passes run 5–25, 334–354, 357–377, 431–451, 476–496, and 522–542; these read IINL…WQYF, AIDF…MNFF, YVGN…LLMF, LPIL…YVTI, LFGL…WPIL, and FMPL…LIYW.

Belongs to the OXA1/ALB3/YidC family. Type 1 subfamily. In terms of assembly, interacts with the Sec translocase complex via SecD. Specifically interacts with transmembrane segments of nascent integral membrane proteins during membrane integration.

Its subcellular location is the cell inner membrane. In terms of biological role, required for the insertion and/or proper folding and/or complex formation of integral membrane proteins into the membrane. Involved in integration of membrane proteins that insert both dependently and independently of the Sec translocase complex, as well as at least some lipoproteins. Aids folding of multispanning membrane proteins. The protein is Membrane protein insertase YidC of Rickettsia rickettsii (strain Iowa).